The sequence spans 304 residues: Acetyl-coenzyme A carboxylase carboxyl transferase subunit beta (304 aa).

Residues 23–292 (VWTKCDSCGQ…PNPEAPREGV (270 aa)) enclose the CoA carboxyltransferase N-terminal domain. The Zn(2+) site is built by C27, C30, C46, and C49. Residues 27 to 49 (CDSCGQVLYRAELERNLEVCPKC) form a C4-type zinc finger. The disordered stretch occupies residues 285–304 (PEAPREGVVVPPVPDQEPEA). Over residues 295-304 (PPVPDQEPEA) the composition is skewed to pro residues.

It belongs to the AccD/PCCB family. In terms of assembly, acetyl-CoA carboxylase is a heterohexamer composed of biotin carboxyl carrier protein (AccB), biotin carboxylase (AccC) and two subunits each of ACCase subunit alpha (AccA) and ACCase subunit beta (AccD). Zn(2+) serves as cofactor.

It is found in the cytoplasm. The catalysed reaction is N(6)-carboxybiotinyl-L-lysyl-[protein] + acetyl-CoA = N(6)-biotinyl-L-lysyl-[protein] + malonyl-CoA. Its pathway is lipid metabolism; malonyl-CoA biosynthesis; malonyl-CoA from acetyl-CoA: step 1/1. In terms of biological role, component of the acetyl coenzyme A carboxylase (ACC) complex. Biotin carboxylase (BC) catalyzes the carboxylation of biotin on its carrier protein (BCCP) and then the CO(2) group is transferred by the transcarboxylase to acetyl-CoA to form malonyl-CoA. The sequence is that of Acetyl-coenzyme A carboxylase carboxyl transferase subunit beta from Shigella sonnei (strain Ss046).